Consider the following 534-residue polypeptide: Zinc finger protein 69 homolog B (534 aa).

Glycyl lysine isopeptide (Lys-Gly) (interchain with G-Cter in SUMO2) cross-links involve residues K37 and K40. Positions 74–145 (LTFKDVSVDF…ERDISGVPSS (72 aa)) constitute a KRAB domain. Glycyl lysine isopeptide (Lys-Gly) (interchain with G-Cter in SUMO2) cross-links involve residues K178 and K235. 9 consecutive C2H2-type zinc fingers follow at residues 279–301 (FECN…MRIH), 307–329 (FRCK…QRIH), 335–357 (YECK…VRIH), 363–385 (YECR…LRTH), 391–413 (FTCK…EIIH), 419–441 (YICN…QRTH), 447–469 (YKCK…QRVH), 475–497 (YECS…QRIH), and 503–525 (YDCN…CKTH).

Belongs to the krueppel C2H2-type zinc-finger protein family.

It localises to the nucleus. Its function is as follows. May be involved in transcriptional regulation. Essential for Golgi structural integrity. The chain is Zinc finger protein 69 homolog B (ZFP69B) from Homo sapiens (Human).